The sequence spans 1676 residues: DNA-directed RNA polymerase subunit beta'-beta'' (1676 aa).

The DNA-directed RNA polymerase subunit beta' stretch occupies residues 1–582 (MCDAIQIRLA…FLKTTPGRII (582 aa)). Positions 64, 66, 79, and 82 each coordinate Zn(2+). Residues Asp454, Asp456, and Asp458 each coordinate Mg(2+). Positions 583-1676 (FYQQAAYHVG…IPAGTGAKYL (1094 aa)) are DNA-directed RNA polymerase subunit beta''. Zn(2+)-binding residues include Cys804, Cys859, Cys866, and Cys869.

This sequence in the N-terminal section; belongs to the RNA polymerase beta' chain family. RpoC1 subfamily. It in the C-terminal section; belongs to the RNA polymerase beta' chain family. RpoC2 subfamily. In plastids the minimal PEP RNA polymerase catalytic core is composed of four subunits: alpha, beta, beta', and beta''. When a (nuclear-encoded) sigma factor is associated with the core the holoenzyme is formed, which can initiate transcription. Beta' and beta'' are fused in this algae. Requires Mg(2+) as cofactor. Zn(2+) is required as a cofactor.

The protein localises to the plastid. It localises to the chloroplast. It catalyses the reaction RNA(n) + a ribonucleoside 5'-triphosphate = RNA(n+1) + diphosphate. DNA-dependent RNA polymerase catalyzes the transcription of DNA into RNA using the four ribonucleoside triphosphates as substrates. In Cyanidioschyzon merolae (strain NIES-3377 / 10D) (Unicellular red alga), this protein is DNA-directed RNA polymerase subunit beta'-beta''.